We begin with the raw amino-acid sequence, 256 residues long: Tryptophan synthase alpha chain (256 aa).

Residues E48 and D59 each act as proton acceptor in the active site.

The protein belongs to the TrpA family. In terms of assembly, tetramer of two alpha and two beta chains.

It catalyses the reaction (1S,2R)-1-C-(indol-3-yl)glycerol 3-phosphate + L-serine = D-glyceraldehyde 3-phosphate + L-tryptophan + H2O. It participates in amino-acid biosynthesis; L-tryptophan biosynthesis; L-tryptophan from chorismate: step 5/5. In terms of biological role, the alpha subunit is responsible for the aldol cleavage of indoleglycerol phosphate to indole and glyceraldehyde 3-phosphate. This Caldicellulosiruptor bescii (strain ATCC BAA-1888 / DSM 6725 / KCTC 15123 / Z-1320) (Anaerocellum thermophilum) protein is Tryptophan synthase alpha chain.